The primary structure comprises 660 residues: Threonine--tRNA ligase (660 aa).

The region spanning 1–64 (MSHSVSLTFP…TEGRIEIVTR (64 aa)) is the TGS domain. Residues 245–547 (DHRRLGREMD…LLENFAGHMP (303 aa)) form a catalytic region. Zn(2+) contacts are provided by Cys-341, His-392, and His-524.

The protein belongs to the class-II aminoacyl-tRNA synthetase family. As to quaternary structure, homodimer. Requires Zn(2+) as cofactor.

Its subcellular location is the cytoplasm. The catalysed reaction is tRNA(Thr) + L-threonine + ATP = L-threonyl-tRNA(Thr) + AMP + diphosphate + H(+). Functionally, catalyzes the attachment of threonine to tRNA(Thr) in a two-step reaction: L-threonine is first activated by ATP to form Thr-AMP and then transferred to the acceptor end of tRNA(Thr). Also edits incorrectly charged L-seryl-tRNA(Thr). This Sinorhizobium medicae (strain WSM419) (Ensifer medicae) protein is Threonine--tRNA ligase.